We begin with the raw amino-acid sequence, 1305 residues long: Contactin-associated protein like 5-1 (1305 aa).

An N-terminal signal peptide occupies residues 1–24; sequence MDSLQRLNGLLTLVLSALWHLGLT. An F5/8 type C domain is found at 25–174; that stretch reads ASNYNCDDPL…IGMRVEAYGC (150 aa). Laminin G-like domains follow at residues 180–360 and 367–544; these read VADF…TFSC and PITF…IDLC. A glycan (N-linked (GlcNAc...) asparagine) is linked at Asn-282. A disulfide bridge connects residues Cys-329 and Cys-360. An N-linked (GlcNAc...) asparagine glycan is attached at Asn-496. Cystine bridges form between Cys-512/Cys-544, Cys-550/Cys-561, and Cys-555/Cys-570. Positions 546 to 583 constitute an EGF-like 1 domain; it reads IKDRCLPNYCEHGGHCAQTWTTFYCNCSDTGYTGATCH. N-linked (GlcNAc...) asparagine glycosylation occurs at Asn-571. Cys-572 and Cys-582 are joined by a disulfide. A Fibrinogen C-terminal domain is found at 584–790; the sequence is DSIYEQSCEV…LRCNGDRHFW (207 aa). An N-linked (GlcNAc...) asparagine glycan is attached at Asn-622. The 166-residue stretch at 791–956 folds into the Laminin G-like 3 domain; it reads NAVSFSTEAS…KLMSGVTPGC (166 aa). 4 disulfide bridges follow: Cys-929–Cys-956, Cys-960–Cys-973, Cys-967–Cys-982, and Cys-984–Cys-994. The EGF-like 2 domain occupies 957–995; sequence PGHCSSYSSNCHNGGKCVEKQSGYSCDCTNSPNEGPFCQ. One can recognise a Laminin G-like 4 domain in the interval 1014 to 1198; the sequence is EPYLVIKNTS…VHGTLTESGC (185 aa). An N-linked (GlcNAc...) asparagine glycan is attached at Asn-1057. A disulfide bridge connects residues Cys-1163 and Cys-1198. A helical transmembrane segment spans residues 1238-1258; the sequence is VIGGIIAVVTFVTFCVIGIMI.

This sequence belongs to the neurexin family.

It is found in the membrane. May play a role in the correct development and proper functioning of the peripheral and central nervous system and be involved in cell adhesion and intercellular communication. This chain is Contactin-associated protein like 5-1 (Cntnap5a), found in Rattus norvegicus (Rat).